Here is a 402-residue protein sequence, read N- to C-terminus: Pyridinium-3,5-bisthiocarboxylic acid mononucleotide nickel insertion protein (402 aa).

The protein belongs to the LarC family.

It carries out the reaction Ni(II)-pyridinium-3,5-bisthiocarboxylate mononucleotide = pyridinium-3,5-bisthiocarboxylate mononucleotide + Ni(2+). Its function is as follows. Involved in the biosynthesis of a nickel-pincer cofactor ((SCS)Ni(II) pincer complex). Binds Ni(2+), and functions in nickel delivery to pyridinium-3,5-bisthiocarboxylic acid mononucleotide (P2TMN), to form the mature cofactor. Is thus probably required for the activation of nickel-pincer cofactor-dependent enzymes. This chain is Pyridinium-3,5-bisthiocarboxylic acid mononucleotide nickel insertion protein, found in Thermotoga sp. (strain RQ2).